A 137-amino-acid chain; its full sequence is NADH dehydrogenase [ubiquinone] 1 beta subcomplex subunit 7 (137 aa).

A lipid anchor (N-myristoyl glycine) is attached at Gly-2. One can recognise a CHCH domain in the interval 56–98 (RDYCAHYLIRFLKCKRDSFPNFLACKHERHDWDYCEHLDYVKR). A Cx9C motif 1 motif is present at residues 59 to 69 (CAHYLIRFLKC). Intrachain disulfides connect Cys-59-Cys-90 and Cys-69-Cys-80. Ser-73 carries the phosphoserine modification. The Cx9C motif 2 motif lies at 80-90 (CKHERHDWDYC). The tract at residues 110–137 (QRKKRREQREADMAKGLGPGEVAPEVAL) is disordered.

This sequence belongs to the complex I NDUFB7 subunit family. In terms of assembly, complex I is composed of 45 different subunits.

The protein localises to the mitochondrion inner membrane. The protein resides in the mitochondrion intermembrane space. Functionally, accessory subunit of the mitochondrial membrane respiratory chain NADH dehydrogenase (Complex I), that is believed not to be involved in catalysis. Complex I functions in the transfer of electrons from NADH to the respiratory chain. The immediate electron acceptor for the enzyme is believed to be ubiquinone. The polypeptide is NADH dehydrogenase [ubiquinone] 1 beta subcomplex subunit 7 (NDUFB7) (Bos taurus (Bovine)).